The sequence spans 503 residues: Aromatase 1 (503 aa).

Residue C437 participates in heme binding.

Belongs to the cytochrome P450 family. Heme is required as a cofactor.

Its subcellular location is the membrane. It catalyses the reaction testosterone + 3 reduced [NADPH--hemoprotein reductase] + 3 O2 = 17beta-estradiol + formate + 3 oxidized [NADPH--hemoprotein reductase] + 4 H2O + 4 H(+). It carries out the reaction androst-4-ene-3,17-dione + 3 reduced [NADPH--hemoprotein reductase] + 3 O2 = estrone + formate + 3 oxidized [NADPH--hemoprotein reductase] + 4 H2O + 4 H(+). Catalyzes the formation of aromatic C18 estrogens from C19 androgens. In Sus scrofa (Pig), this protein is Aromatase 1 (CYP19A1).